We begin with the raw amino-acid sequence, 267 residues long: Undecaprenyl-diphosphatase (267 aa).

8 helical membrane passes run 4–24 (ILIIIILGIVEGITEFFPISS), 41–61 (NIQNIIKIIQIGPIFSIILLF), 84–104 (ILILFNLVLSCIPISILGFMF), 116–136 (YISYFLILGSIFFILSEFISL), 160–180 (CFSLLPGVSRLGITISIGLIL), 185–205 (YVLFKFSMILFSSIMPAVLIL), 216–236 (ENIFFVIIGVMSSFLTSLIFG), and 246–266 (TSLIIFAIYRIFIACIILFTC).

Belongs to the UppP family.

It is found in the cell membrane. The catalysed reaction is di-trans,octa-cis-undecaprenyl diphosphate + H2O = di-trans,octa-cis-undecaprenyl phosphate + phosphate + H(+). Its function is as follows. Catalyzes the dephosphorylation of undecaprenyl diphosphate (UPP). Confers resistance to bacitracin. The protein is Undecaprenyl-diphosphatase of Wigglesworthia glossinidia brevipalpis.